We begin with the raw amino-acid sequence, 290 residues long: Lipoyl synthase 2 (290 aa).

Positions 37, 42, 48, 63, 67, 70, and 283 each coordinate [4Fe-4S] cluster. The Radical SAM core domain occupies 49–272 (YGQKTATFLL…GNIARELGFS (224 aa)).

It belongs to the radical SAM superfamily. Lipoyl synthase family. Requires [4Fe-4S] cluster as cofactor.

The protein localises to the cytoplasm. It catalyses the reaction [[Fe-S] cluster scaffold protein carrying a second [4Fe-4S](2+) cluster] + N(6)-octanoyl-L-lysyl-[protein] + 2 oxidized [2Fe-2S]-[ferredoxin] + 2 S-adenosyl-L-methionine + 4 H(+) = [[Fe-S] cluster scaffold protein] + N(6)-[(R)-dihydrolipoyl]-L-lysyl-[protein] + 4 Fe(3+) + 2 hydrogen sulfide + 2 5'-deoxyadenosine + 2 L-methionine + 2 reduced [2Fe-2S]-[ferredoxin]. Its pathway is protein modification; protein lipoylation via endogenous pathway; protein N(6)-(lipoyl)lysine from octanoyl-[acyl-carrier-protein]: step 2/2. Its function is as follows. Catalyzes the radical-mediated insertion of two sulfur atoms into the C-6 and C-8 positions of the octanoyl moiety bound to the lipoyl domains of lipoate-dependent enzymes, thereby converting the octanoylated domains into lipoylated derivatives. The chain is Lipoyl synthase 2 from Thermosynechococcus vestitus (strain NIES-2133 / IAM M-273 / BP-1).